The following is a 277-amino-acid chain: Caspase-3 (277 aa).

Met1 is modified (N-acetylmethionine). 2 propeptides span residues 1–9 (MENNETSVD) and 10–28 (SKSI…KSMD). Lys11 is subject to N6-acetyllysine. Phosphoserine is present on Ser26. Residues His121 and Cys163 contribute to the active site. An S-nitrosocysteine; in inhibited form modification is found at Cys163.

The protein belongs to the peptidase C14A family. As to quaternary structure, heterotetramer that consists of two anti-parallel arranged heterodimers, each one formed by a 17 kDa (p17) and a 12 kDa (p12) subunit. Interacts with BIRC6/bruce. Cleavage by granzyme B, caspase-6, caspase-8 and caspase-10 generates the two active subunits. Additional processing of the propeptides is likely due to the autocatalytic activity of the activated protease. Active heterodimers between the small subunit of caspase-7 protease and the large subunit of caspase-3 also occur and vice versa. Post-translationally, S-nitrosylated on its catalytic site cysteine in unstimulated cell lines and denitrosylated upon activation of the Fas apoptotic pathway, associated with an increase in intracellular caspase activity. Fas therefore activates caspase-3 not only by inducing the cleavage of the caspase zymogen to its active subunits, but also by stimulating the denitrosylation of its active site thiol. In terms of processing, ubiquitinated by BIRC6; this activity is inhibited by DIABLO/SMAC.

It is found in the cytoplasm. It catalyses the reaction Strict requirement for an Asp residue at positions P1 and P4. It has a preferred cleavage sequence of Asp-Xaa-Xaa-Asp-|- with a hydrophobic amino-acid residue at P2 and a hydrophilic amino-acid residue at P3, although Val or Ala are also accepted at this position.. Inhibited by BIRC6; following inhibition of BIRC6-caspase binding by DIABLO/SMAC, BIRC6 is subjected to caspase cleavage, leading to an increase in active caspases. In terms of biological role, involved in the activation cascade of caspases responsible for apoptosis execution. At the onset of apoptosis, it proteolytically cleaves poly(ADP-ribose) polymerase PARP1 at a '216-Asp-|-Gly-217' bond. Cleaves and activates sterol regulatory element binding proteins (SREBPs) between the basic helix-loop-helix leucine zipper domain and the membrane attachment domain. Cleaves and activates caspase-6, -7 and -9 (CASP6, CASP7 and CASP9, respectively). Cleaves and inactivates interleukin-18 (IL18). Triggers cell adhesion in sympathetic neurons through RET cleavage. Cleaves IL-1 beta between an Asp and an Ala, releasing the mature cytokine which is involved in a variety of inflammatory processes. Cleaves and inhibits serine/threonine-protein kinase AKT1 in response to oxidative stress. Acts as an inhibitor of type I interferon production during virus-induced apoptosis by mediating cleavage of antiviral proteins CGAS, IRF3 and MAVS, thereby preventing cytokine overproduction. Also involved in pyroptosis by mediating cleavage and activation of gasdermin-E (GSDME). Cleaves XRCC4 and phospholipid scramblase proteins XKR4, XKR8 and XKR9, leading to promote phosphatidylserine exposure on apoptotic cell surface. Cleaves BIRC6 following inhibition of BIRC6-caspase binding by DIABLO/SMAC. The chain is Caspase-3 (CASP3) from Mesocricetus auratus (Golden hamster).